Reading from the N-terminus, the 150-residue chain is FAD synthase (150 aa).

Residues 11 to 12 (TF), 16 to 19 (HPGH), Asp96, and Tyr124 contribute to the ATP site.

The protein belongs to the archaeal FAD synthase family. Homodimer. A divalent metal cation is required as a cofactor.

The catalysed reaction is FMN + ATP + H(+) = FAD + diphosphate. The protein operates within cofactor biosynthesis; FAD biosynthesis; FAD from FMN: step 1/1. Catalyzes the transfer of the AMP portion of ATP to flavin mononucleotide (FMN) to produce flavin adenine dinucleotide (FAD) coenzyme. The protein is FAD synthase of Methanococcus maripaludis (strain C5 / ATCC BAA-1333).